Consider the following 934-residue polypeptide: Aconitate hydratase A (934 aa).

Residues 398–454 (EPVDESLPAKRMDSEGAVQKEGEDVAGYNSSRAGHGESAAEGAAGRQSNPVVVSSPN) form a disordered region. Residues 404 to 420 (LPAKRMDSEGAVQKEGE) show a composition bias toward basic and acidic residues. Over residues 427 to 445 (SSRAGHGESAAEGAAGRQS) the composition is skewed to low complexity. [4Fe-4S] cluster is bound by residues C473, C539, and C542.

Belongs to the aconitase/IPM isomerase family. Monomer. Requires [4Fe-4S] cluster as cofactor.

It catalyses the reaction citrate = D-threo-isocitrate. The enzyme catalyses (2S,3R)-3-hydroxybutane-1,2,3-tricarboxylate = 2-methyl-cis-aconitate + H2O. It functions in the pathway carbohydrate metabolism; tricarboxylic acid cycle; isocitrate from oxaloacetate: step 2/2. It participates in organic acid metabolism; propanoate degradation. In terms of biological role, involved in the catabolism of short chain fatty acids (SCFA) via the tricarboxylic acid (TCA)(acetyl degradation route) and probably via the 2-methylcitrate cycle I (propionate degradation route). Catalyzes the reversible isomerization of citrate to isocitrate via cis-aconitate. Could catalyze the hydration of 2-methyl-cis-aconitate to yield (2R,3S)-2-methylisocitrate. The apo form of AcnA functions as a RNA-binding regulatory protein. The sequence is that of Aconitate hydratase A (acn) from Corynebacterium diphtheriae (strain ATCC 700971 / NCTC 13129 / Biotype gravis).